We begin with the raw amino-acid sequence, 398 residues long: 4-hydroxy-3-methylbut-2-enyl diphosphate reductase (398 aa).

Cys-66 is a binding site for [4Fe-4S] cluster. Residue His-96 coordinates (2E)-4-hydroxy-3-methylbut-2-enyl diphosphate. Dimethylallyl diphosphate is bound at residue His-96. His-96 is an isopentenyl diphosphate binding site. Cys-157 is a [4Fe-4S] cluster binding site. His-185 serves as a coordination point for (2E)-4-hydroxy-3-methylbut-2-enyl diphosphate. His-185 contributes to the dimethylallyl diphosphate binding site. His-185 serves as a coordination point for isopentenyl diphosphate. Glu-187 functions as the Proton donor in the catalytic mechanism. Thr-250 serves as a coordination point for (2E)-4-hydroxy-3-methylbut-2-enyl diphosphate. Cys-288 contributes to the [4Fe-4S] cluster binding site. Ser-317, Ser-318, Asn-319, and Ser-380 together coordinate (2E)-4-hydroxy-3-methylbut-2-enyl diphosphate. Dimethylallyl diphosphate is bound by residues Ser-317, Ser-318, Asn-319, and Ser-380. Isopentenyl diphosphate contacts are provided by Ser-317, Ser-318, Asn-319, and Ser-380.

This sequence belongs to the IspH family. It depends on [4Fe-4S] cluster as a cofactor.

The enzyme catalyses isopentenyl diphosphate + 2 oxidized [2Fe-2S]-[ferredoxin] + H2O = (2E)-4-hydroxy-3-methylbut-2-enyl diphosphate + 2 reduced [2Fe-2S]-[ferredoxin] + 2 H(+). It catalyses the reaction dimethylallyl diphosphate + 2 oxidized [2Fe-2S]-[ferredoxin] + H2O = (2E)-4-hydroxy-3-methylbut-2-enyl diphosphate + 2 reduced [2Fe-2S]-[ferredoxin] + 2 H(+). The protein operates within isoprenoid biosynthesis; dimethylallyl diphosphate biosynthesis; dimethylallyl diphosphate from (2E)-4-hydroxy-3-methylbutenyl diphosphate: step 1/1. Its pathway is isoprenoid biosynthesis; isopentenyl diphosphate biosynthesis via DXP pathway; isopentenyl diphosphate from 1-deoxy-D-xylulose 5-phosphate: step 6/6. Catalyzes the conversion of 1-hydroxy-2-methyl-2-(E)-butenyl 4-diphosphate (HMBPP) into a mixture of isopentenyl diphosphate (IPP) and dimethylallyl diphosphate (DMAPP). Acts in the terminal step of the DOXP/MEP pathway for isoprenoid precursor biosynthesis. This chain is 4-hydroxy-3-methylbut-2-enyl diphosphate reductase, found in Prochlorococcus marinus (strain MIT 9301).